The sequence spans 718 residues: Kinesin-like protein KIF2C (718 aa).

Residues 1 to 248 are globular; the sequence is MESLPARLFP…CHPLTLTDPT (248 aa). A phosphoserine mark is found at serine 3 and serine 19. Residues 86 to 111 are disordered; the sequence is PKQKRRSVNSKIPAPKEGLRSRSTRM. Serine 92 carries the phosphoserine; by AURKB modification. A Microtubule tip localization signal motif is present at residues 95-98; the sequence is SKIP. A phosphoserine mark is found at serine 106, serine 108, serine 112, serine 163, and serine 186. The segment at 201-232 is negative regulator of microtubule-binding; the sequence is EKRAQNSEIRIKRAQEYDSSFPNWEFARMIKE. Residues 252-582 form the Kinesin motor domain; sequence RICVCVRKRP…LRYADRVKEL (331 aa). ATP is bound by residues arginine 258 and 342–349; that span reads GQTGSGKT. A Nuclear localization signal motif is present at residues 409–412; the sequence is KKAK. Serine 513 and serine 626 each carry phosphoserine. Coiled coils occupy residues 613 to 651 and 689 to 716; these read NFKEEEELSSQMSSFNEAMSQIRELEERAMEELREIIQQ and ALREVIKALRVAMQLEEQASKQMNSKKR.

Belongs to the TRAFAC class myosin-kinesin ATPase superfamily. Kinesin family. MCAK/KIF2 subfamily. Interacts with CENPH. Interacts with MTUS2/TIP150; the interaction is direct. Interacts with MAPRE1; the interaction is direct, regulated by phosphorylation and is probably required for targeting to growing microtubule plus ends. Interacts with KIF18B at microtubule tips; this interaction increases the affinity of both partners for microtubule plus ends and is required for robust microtubule depolymerization. Phosphorylation by AURKA or AURKB strongly reduces KIF18B-binding. In terms of processing, phosphorylation by AURKB, regulates association with centromeres and kinetochores and the microtubule depolymerization activity. Ubiquitinated.

Its subcellular location is the cytoplasm. It localises to the cytoskeleton. The protein localises to the nucleus. It is found in the chromosome. The protein resides in the centromere. Its subcellular location is the kinetochore. In complex with KIF18B, constitutes the major microtubule plus-end depolymerizing activity in mitotic cells. Regulates the turnover of microtubules at the kinetochore and functions in chromosome segregation during mitosis. Plays a role in chromosome congression and is required for the lateral to end-on conversion of the chromosome-microtubule attachment. The protein is Kinesin-like protein KIF2C (KIF2C) of Cricetulus griseus (Chinese hamster).